The chain runs to 208 residues: Small ribosomal subunit protein uS2 (208 aa).

It belongs to the universal ribosomal protein uS2 family.

The polypeptide is Small ribosomal subunit protein uS2 (Cenarchaeum symbiosum (strain A)).